Here is a 261-residue protein sequence, read N- to C-terminus: Rhomboid-type serine protease 2 (261 aa).

5 consecutive transmembrane segments (helical) span residues 17-37 (LTAGLSVFLTLVYVLNWVFPI), 58-78 (LYPLAHLSIFHLLLNLMSLFV), 94-114 (ITLNLLAIVTGVVYCLVGMLL), 116-136 (PNVYVGGASGWCFTLCGYFAV), and 155-175 (LYIPLVFLVLVTLLMPGSSFV). The Nucleophile role is filled by serine 124. Histidine 177 is a catalytic residue.

This sequence belongs to the peptidase S54 family.

Its subcellular location is the golgi apparatus membrane. It localises to the golgi apparatus. It is found in the cis-Golgi network membrane. The enzyme catalyses Cleaves type-1 transmembrane domains using a catalytic dyad composed of serine and histidine that are contributed by different transmembrane domains.. Its function is as follows. Probable rhomboid-type serine protease that catalyzes intramembrane proteolysis. In Eremothecium gossypii (strain ATCC 10895 / CBS 109.51 / FGSC 9923 / NRRL Y-1056) (Yeast), this protein is Rhomboid-type serine protease 2 (RBD2).